A 443-amino-acid polypeptide reads, in one-letter code: Proline--tRNA ligase (443 aa).

It belongs to the class-II aminoacyl-tRNA synthetase family. ProS type 2 subfamily. In terms of assembly, homodimer.

The protein localises to the cytoplasm. The catalysed reaction is tRNA(Pro) + L-proline + ATP = L-prolyl-tRNA(Pro) + AMP + diphosphate. In terms of biological role, catalyzes the attachment of proline to tRNA(Pro) in a two-step reaction: proline is first activated by ATP to form Pro-AMP and then transferred to the acceptor end of tRNA(Pro). The polypeptide is Proline--tRNA ligase (Caulobacter vibrioides (strain ATCC 19089 / CIP 103742 / CB 15) (Caulobacter crescentus)).